The sequence spans 291 residues: Acetyl-coenzyme A carboxylase carboxyl transferase subunit beta (291 aa).

A disordered region spans residues 1-23 (MSWLSKLMPSGIRTDNTPSKKRS). The region spanning 28–291 (LWEKCSNCGS…LGRQPAPEVA (264 aa)) is the CoA carboxyltransferase N-terminal domain. Positions 32, 35, 51, and 54 each coordinate Zn(2+). The C4-type zinc-finger motif lies at 32-54 (CSNCGSALYRPELEENLEVCPKC).

The protein belongs to the AccD/PCCB family. As to quaternary structure, acetyl-CoA carboxylase is a heterohexamer composed of biotin carboxyl carrier protein (AccB), biotin carboxylase (AccC) and two subunits each of ACCase subunit alpha (AccA) and ACCase subunit beta (AccD). Zn(2+) serves as cofactor.

Its subcellular location is the cytoplasm. It carries out the reaction N(6)-carboxybiotinyl-L-lysyl-[protein] + acetyl-CoA = N(6)-biotinyl-L-lysyl-[protein] + malonyl-CoA. The protein operates within lipid metabolism; malonyl-CoA biosynthesis; malonyl-CoA from acetyl-CoA: step 1/1. In terms of biological role, component of the acetyl coenzyme A carboxylase (ACC) complex. Biotin carboxylase (BC) catalyzes the carboxylation of biotin on its carrier protein (BCCP) and then the CO(2) group is transferred by the transcarboxylase to acetyl-CoA to form malonyl-CoA. In Stenotrophomonas maltophilia (strain R551-3), this protein is Acetyl-coenzyme A carboxylase carboxyl transferase subunit beta.